Here is a 235-residue protein sequence, read N- to C-terminus: MAQTLNRSLTDLGALLHLVDPTLPIGGFNHSNGLETFVQQRVVESKATLEEYVQTQLLQNWIYNDGAYLSLAFDAMCEGNFDRLCELDWQLSATKVARESREGSFKLGVRLLKIFIRYETHTLLTAYQQAIAEKRVQGYFPIVFAMVAQAMGLSKADTLYAFYYNAAVGAITNGVKLIPLSQMDGQDILFDLRGSLVQAVELSFDPDEEWLGAATLANDIRAMQHEVLYTRLYMS.

The protein belongs to the UreF family. As to quaternary structure, ureD, UreF and UreG form a complex that acts as a GTP-hydrolysis-dependent molecular chaperone, activating the urease apoprotein by helping to assemble the nickel containing metallocenter of UreC. The UreE protein probably delivers the nickel.

It localises to the cytoplasm. In terms of biological role, required for maturation of urease via the functional incorporation of the urease nickel metallocenter. The chain is Urease accessory protein UreF from Haemophilus influenzae (strain 86-028NP).